A 104-amino-acid chain; its full sequence is uncharacterized protein (104 aa).

This is an uncharacterized protein from Methanocaldococcus jannaschii (strain ATCC 43067 / DSM 2661 / JAL-1 / JCM 10045 / NBRC 100440) (Methanococcus jannaschii).